The following is a 227-amino-acid chain: DNA utilization protein YhgH (227 aa).

This sequence belongs to the ComF/GntX family.

In terms of biological role, required for the use of extracellular DNA as a nutrient. Has been suggested to be involved in gluconate metabolism. This Escherichia coli (strain K12) protein is DNA utilization protein YhgH.